Consider the following 276-residue polypeptide: MLKARVIPCLDVKDGRVVKGVNFVDLRDAGDPVQCAIAYDAAGADELCFLDITASHEDRGILLDVVERTAAACFMPLTVGGGVRTEDDIRKLLLAGADKVSIMSAAVTDRDFVRRAAEKFGSQCVVVAIDAKEVRPGAWEIFTHGGRKPTGIDAITYARDVAERGAGEILLTSMDRDGTKAGFDLALTRAVSSAVSIPVIASGGVGTLDHLVEGIAQGGAQAVLAASIFHFGTFTIAEAKHYMAQHGLPMRLDTGAAMPPGPFPAPSPPVSPAATG.

Residues Asp-11 and Asp-130 contribute to the active site.

It belongs to the HisA/HisF family. In terms of assembly, heterodimer of HisH and HisF.

The protein resides in the cytoplasm. It carries out the reaction 5-[(5-phospho-1-deoxy-D-ribulos-1-ylimino)methylamino]-1-(5-phospho-beta-D-ribosyl)imidazole-4-carboxamide + L-glutamine = D-erythro-1-(imidazol-4-yl)glycerol 3-phosphate + 5-amino-1-(5-phospho-beta-D-ribosyl)imidazole-4-carboxamide + L-glutamate + H(+). Its pathway is amino-acid biosynthesis; L-histidine biosynthesis; L-histidine from 5-phospho-alpha-D-ribose 1-diphosphate: step 5/9. In terms of biological role, IGPS catalyzes the conversion of PRFAR and glutamine to IGP, AICAR and glutamate. The HisF subunit catalyzes the cyclization activity that produces IGP and AICAR from PRFAR using the ammonia provided by the HisH subunit. The sequence is that of Imidazole glycerol phosphate synthase subunit HisF from Beijerinckia indica subsp. indica (strain ATCC 9039 / DSM 1715 / NCIMB 8712).